Here is a 331-residue protein sequence, read N- to C-terminus: Isopenicillin N synthase (331 aa).

The isopenicillin N site is built by Arg-87, Tyr-91, Ser-183, and Tyr-189. N-[(5S)-5-amino-5-carboxypentanoyl]-L-cysteinyl-D-valine is bound by residues Arg-87, Tyr-91, Ser-183, Tyr-189, His-214, and Asp-216. In terms of domain architecture, Fe2OG dioxygenase spans 181 to 288 (LSSVVLIRYP…RQSLPFFVNL (108 aa)). Positions 214, 216, and 270 each coordinate Fe(2+). Arg-279 is a 2-oxoglutarate binding site. Ser-281 is an isopenicillin N binding site. Ser-281 lines the N-[(5S)-5-amino-5-carboxypentanoyl]-L-cysteinyl-D-valine pocket.

This sequence belongs to the iron/ascorbate-dependent oxidoreductase family. The cofactor is Fe(2+).

It is found in the cytoplasm. It localises to the cytosol. The enzyme catalyses N-[(5S)-5-amino-5-carboxypentanoyl]-L-cysteinyl-D-valine + O2 = isopenicillin N + 2 H2O. It participates in antibiotic biosynthesis; penicillin G biosynthesis; penicillin G from L-alpha-aminoadipate and L-cysteine and L-valine: step 2/3. In terms of biological role, isopenicillin N synthase; part of the gene cluster that mediates the biosynthesis of penicillin, the world's most important antibiotic. The first step of the pathway is performed by the trimodular NRPS acvA that produces the tripeptide N-[(5S)-5-amino-5-carboxypentanoyl]-L-cysteinyl-D-valine (LLD-ACV or ACV) via condensation of the 3 residues L-2-aminoadipate, L-cysteine and L-valine. The precursor amino acids for penicillin biosynthesis are withdrawn from the vacuolar amino acid pool by the MFS-type transporter penV. Each of the constituent amino acids of the tripeptide acv are activated as aminoacyl-adenylates with peptide bonds formed through the participation of amino acid thioester intermediates. The tripeptide ACV is then cyclized to form isopenicillin N (IPN) by the isopenicillin N synthase ipnA that forms the beta-lactam nucleus. Finally, the alpha-aminoadipyl side chain is exchanged for phenylacetic acid by the isopenicillin N acyltransferase aatA to yield penicillin. This step occurs in the peroxisomal matrix and the penM and paaT transporters are involved in the isopenicillin N and phenylacetic acid import into the peroxisome, respectively. The protein is Isopenicillin N synthase of Penicillium rubens (strain ATCC 28089 / DSM 1075 / NRRL 1951 / Wisconsin 54-1255) (Penicillium chrysogenum).